A 315-amino-acid polypeptide reads, in one-letter code: 4-hydroxy-3-methylbut-2-enyl diphosphate reductase (315 aa).

Cys-12 is a binding site for [4Fe-4S] cluster. (2E)-4-hydroxy-3-methylbut-2-enyl diphosphate is bound by residues His-41 and His-74. 2 residues coordinate dimethylallyl diphosphate: His-41 and His-74. Isopentenyl diphosphate is bound by residues His-41 and His-74. Cys-96 is a binding site for [4Fe-4S] cluster. His-124 contacts (2E)-4-hydroxy-3-methylbut-2-enyl diphosphate. His-124 is a binding site for dimethylallyl diphosphate. Position 124 (His-124) interacts with isopentenyl diphosphate. Glu-126 serves as the catalytic Proton donor. Residue Thr-168 participates in (2E)-4-hydroxy-3-methylbut-2-enyl diphosphate binding. Cys-198 is a [4Fe-4S] cluster binding site. 4 residues coordinate (2E)-4-hydroxy-3-methylbut-2-enyl diphosphate: Ser-226, Ser-227, Asn-228, and Ser-270. Residues Ser-226, Ser-227, Asn-228, and Ser-270 each contribute to the dimethylallyl diphosphate site. Positions 226, 227, 228, and 270 each coordinate isopentenyl diphosphate.

Belongs to the IspH family. The cofactor is [4Fe-4S] cluster.

The catalysed reaction is isopentenyl diphosphate + 2 oxidized [2Fe-2S]-[ferredoxin] + H2O = (2E)-4-hydroxy-3-methylbut-2-enyl diphosphate + 2 reduced [2Fe-2S]-[ferredoxin] + 2 H(+). It catalyses the reaction dimethylallyl diphosphate + 2 oxidized [2Fe-2S]-[ferredoxin] + H2O = (2E)-4-hydroxy-3-methylbut-2-enyl diphosphate + 2 reduced [2Fe-2S]-[ferredoxin] + 2 H(+). The protein operates within isoprenoid biosynthesis; dimethylallyl diphosphate biosynthesis; dimethylallyl diphosphate from (2E)-4-hydroxy-3-methylbutenyl diphosphate: step 1/1. Its pathway is isoprenoid biosynthesis; isopentenyl diphosphate biosynthesis via DXP pathway; isopentenyl diphosphate from 1-deoxy-D-xylulose 5-phosphate: step 6/6. Its function is as follows. Catalyzes the conversion of 1-hydroxy-2-methyl-2-(E)-butenyl 4-diphosphate (HMBPP) into a mixture of isopentenyl diphosphate (IPP) and dimethylallyl diphosphate (DMAPP). Acts in the terminal step of the DOXP/MEP pathway for isoprenoid precursor biosynthesis. This chain is 4-hydroxy-3-methylbut-2-enyl diphosphate reductase, found in Pseudomonas putida (strain GB-1).